The chain runs to 299 residues: tRNA-cytidine(32) 2-sulfurtransferase (299 aa).

Positions 56–61 (SGGKDS) match the PP-loop motif motif. [4Fe-4S] cluster-binding residues include Cys-131, Cys-134, and Cys-222.

The protein belongs to the TtcA family. Homodimer. Mg(2+) serves as cofactor. It depends on [4Fe-4S] cluster as a cofactor.

Its subcellular location is the cytoplasm. It catalyses the reaction cytidine(32) in tRNA + S-sulfanyl-L-cysteinyl-[cysteine desulfurase] + AH2 + ATP = 2-thiocytidine(32) in tRNA + L-cysteinyl-[cysteine desulfurase] + A + AMP + diphosphate + H(+). Its pathway is tRNA modification. Catalyzes the ATP-dependent 2-thiolation of cytidine in position 32 of tRNA, to form 2-thiocytidine (s(2)C32). The sulfur atoms are provided by the cysteine/cysteine desulfurase (IscS) system. The protein is tRNA-cytidine(32) 2-sulfurtransferase of Xylella fastidiosa (strain 9a5c).